The sequence spans 116 residues: Prefoldin subunit beta (116 aa).

It belongs to the prefoldin subunit beta family. As to quaternary structure, heterohexamer of two alpha and four beta subunits.

It localises to the cytoplasm. Its function is as follows. Molecular chaperone capable of stabilizing a range of proteins. Seems to fulfill an ATP-independent, HSP70-like function in archaeal de novo protein folding. This chain is Prefoldin subunit beta (pfdB), found in Archaeoglobus fulgidus (strain ATCC 49558 / DSM 4304 / JCM 9628 / NBRC 100126 / VC-16).